Reading from the N-terminus, the 87-residue chain is uncharacterized protein (87 aa).

A signal peptide spans 1–26 (MMSTQHFILSLTILIIISNLHDEVNA). 3 disulfides stabilise this stretch: Cys61-Cys75, Cys68-Cys79, and Cys74-Cys84.

The protein resides in the secreted. This is an uncharacterized protein from Schistosoma japonicum (Blood fluke).